The following is a 132-amino-acid chain: Small ribosomal subunit protein uS11 (132 aa).

It belongs to the universal ribosomal protein uS11 family. In terms of assembly, part of the 30S ribosomal subunit. Interacts with proteins S7 and S18. Binds to IF-3.

Functionally, located on the platform of the 30S subunit, it bridges several disparate RNA helices of the 16S rRNA. Forms part of the Shine-Dalgarno cleft in the 70S ribosome. This is Small ribosomal subunit protein uS11 from Cupriavidus pinatubonensis (strain JMP 134 / LMG 1197) (Cupriavidus necator (strain JMP 134)).